We begin with the raw amino-acid sequence, 84 residues long: Large ribosomal subunit protein bL27 (84 aa).

Residues 1-25 are disordered; the sequence is MAHKKGAGSTKNGRDSKPKMLGVKR.

The protein belongs to the bacterial ribosomal protein bL27 family.

The sequence is that of Large ribosomal subunit protein bL27 from Dehalococcoides mccartyi (strain ATCC BAA-2266 / KCTC 15142 / 195) (Dehalococcoides ethenogenes (strain 195)).